A 104-amino-acid polypeptide reads, in one-letter code: Replication restart protein PriB (104 aa).

The SSB domain maps to 1-101; it reads MTNRLALSGT…LHAEQIELID (101 aa).

This sequence belongs to the PriB family. In terms of assembly, homodimer. Interacts with PriA and DnaT. Component of the replication restart primosome. Primosome assembly occurs via a 'hand-off' mechanism. PriA binds to replication forks, subsequently PriB then DnaT bind; DnaT then displaces ssDNA to generate the helicase loading substrate.

In terms of biological role, involved in the restart of stalled replication forks, which reloads the replicative helicase on sites other than the origin of replication; the PriA-PriB pathway is the major replication restart pathway. During primosome assembly it facilitates complex formation between PriA and DnaT on DNA; stabilizes PriA on DNA. Stimulates the DNA unwinding activity of PriA helicase. The polypeptide is Replication restart protein PriB (Salmonella agona (strain SL483)).